The primary structure comprises 159 residues: Phosphopantetheine adenylyltransferase (159 aa).

Thr-10 is a binding site for substrate. ATP is bound by residues 10–11 (TF) and His-18. The substrate site is built by Lys-42, Met-74, and Arg-88. ATP-binding positions include 89 to 91 (GLR), Glu-99, and 124 to 130 (WSFISSS).

This sequence belongs to the bacterial CoaD family. Homohexamer. Requires Mg(2+) as cofactor.

Its subcellular location is the cytoplasm. The enzyme catalyses (R)-4'-phosphopantetheine + ATP + H(+) = 3'-dephospho-CoA + diphosphate. Its pathway is cofactor biosynthesis; coenzyme A biosynthesis; CoA from (R)-pantothenate: step 4/5. Its function is as follows. Reversibly transfers an adenylyl group from ATP to 4'-phosphopantetheine, yielding dephospho-CoA (dPCoA) and pyrophosphate. This is Phosphopantetheine adenylyltransferase from Escherichia coli (strain UTI89 / UPEC).